We begin with the raw amino-acid sequence, 318 residues long: MANTLEQLKSYTTIVADTGDIEAIKRYQPEDATTNPSLILKAAQIPEYSALIDNAIAWAKLQSADIEQQIDDASDKLAVNIGVEILKLVPGRISTEVDARLSFDKEKSIAKAHKLVRLYQEAGVDKSRILIKLASTWEGICAAKELEQEGINCNLTLLFSFAQARACAEAGVYLISPFVGRILDWYKKDTGKDYDAVNDPGVVSVTEIYNYYKQHGYNTVVMGASFRNIGEIIELAGCDRLTIGPSLLEELANSQVTIQPKLIPASTTVAAGEPLTEAQFRWDFNQDPMAVDKLAEGIRNFAIDQGKLEVMLKAKLAN.

Residue K132 is the Schiff-base intermediate with substrate of the active site.

The protein belongs to the transaldolase family. Type 1 subfamily. Homodimer.

The protein resides in the cytoplasm. It carries out the reaction D-sedoheptulose 7-phosphate + D-glyceraldehyde 3-phosphate = D-erythrose 4-phosphate + beta-D-fructose 6-phosphate. It participates in carbohydrate degradation; pentose phosphate pathway; D-glyceraldehyde 3-phosphate and beta-D-fructose 6-phosphate from D-ribose 5-phosphate and D-xylulose 5-phosphate (non-oxidative stage): step 2/3. Functionally, transaldolase is important for the balance of metabolites in the pentose-phosphate pathway. The protein is Transaldolase of Shewanella sp. (strain MR-4).